Here is a 359-residue protein sequence, read N- to C-terminus: 3-isopropylmalate dehydrogenase (359 aa).

74-85 provides a ligand contact to NAD(+); sequence GPKWGTGSVRPE. Residues Arg92, Arg102, Arg131, and Asp220 each coordinate substrate. Residues Asp220, Asp245, and Asp249 each contribute to the Mg(2+) site. NAD(+) is bound at residue 284 to 295; it reads GSAPDLPANKVN.

The protein belongs to the isocitrate and isopropylmalate dehydrogenases family. Homodimer. Requires Mg(2+) as cofactor. The cofactor is Mn(2+).

It localises to the cytoplasm. It carries out the reaction (2R,3S)-3-isopropylmalate + NAD(+) = 4-methyl-2-oxopentanoate + CO2 + NADH. It participates in amino-acid biosynthesis; L-leucine biosynthesis; L-leucine from 3-methyl-2-oxobutanoate: step 3/4. Its function is as follows. Catalyzes the oxidation of 3-carboxy-2-hydroxy-4-methylpentanoate (3-isopropylmalate) to 3-carboxy-4-methyl-2-oxopentanoate. The product decarboxylates to 4-methyl-2 oxopentanoate. The protein is 3-isopropylmalate dehydrogenase (LEU2) of Kluyveromyces marxianus (Yeast).